Consider the following 454-residue polypeptide: Chromosomal replication initiator protein DnaA (454 aa).

A domain I, interacts with DnaA modulators region spans residues 1-79 (MSLCLWKQCL…NSPFIKFKVY (79 aa)). The segment at 79-117 (YQTSKEKKFKKNILQKIQNLNAKPIWDKIPIFKKSSHRS) is domain II. The segment at 118-334 (NINKKHSFEN…GALNRVIVNA (217 aa)) is domain III, AAA+ region. ATP-binding residues include G162, G164, K165, and T166. A domain IV, binds dsDNA region spans residues 335 to 454 (NFTHRSITVE…FSNLIRTLSV (120 aa)).

The protein belongs to the DnaA family. In terms of assembly, oligomerizes as a right-handed, spiral filament on DNA at oriC.

Its subcellular location is the cytoplasm. Plays an essential role in the initiation and regulation of chromosomal replication. ATP-DnaA binds to the origin of replication (oriC) to initiate formation of the DNA replication initiation complex once per cell cycle. Binds the DnaA box (a 9 base pair repeat at the origin) and separates the double-stranded (ds)DNA. Forms a right-handed helical filament on oriC DNA; dsDNA binds to the exterior of the filament while single-stranded (ss)DNA is stabiized in the filament's interior. The ATP-DnaA-oriC complex binds and stabilizes one strand of the AT-rich DNA unwinding element (DUE), permitting loading of DNA polymerase. After initiation quickly degrades to an ADP-DnaA complex that is not apt for DNA replication. Binds acidic phospholipids. This Buchnera aphidicola subsp. Schizaphis graminum (strain Sg) protein is Chromosomal replication initiator protein DnaA.